A 231-amino-acid polypeptide reads, in one-letter code: Cytochrome b-c1 complex subunit Rieske, mitochondrial (231 aa).

Residues 1–24 (MAPVSIVSRAAMRAAAAPARAVRA) constitute a mitochondrion transit peptide. Positions 25–32 (LTTSTALQ) are cleaved as a propeptide — removed in mature form. Residues 33–65 (GSSSSTFESPFKGESKAAKVPDFGKYMSKAPPS) lie on the Mitochondrial matrix side of the membrane. A helical transmembrane segment spans residues 66-95 (TNMLFSYFMVGTMGAITAAGAKSTIQEFLK). Residues 96–231 (NMSASADVLA…FPEEGKLVIG (136 aa)) lie on the Mitochondrial intermembrane side of the membrane. One can recognise a Rieske domain in the interval 134-229 (RHRTPAEIEE…YEFPEEGKLV (96 aa)). [2Fe-2S] cluster-binding residues include C174, H176, C193, and H196. A disulfide bond links C179 and C195.

Belongs to the Rieske iron-sulfur protein family. In terms of assembly, component of the ubiquinol-cytochrome c oxidoreductase (cytochrome b-c1 complex, complex III, CIII), a multisubunit enzyme composed of 10 subunits. The complex is composed of 3 respiratory subunits cytochrome b (cob), cytochrome c1 (cyt-1) and Rieske protein (fes-1), 2 core protein subunits pep and ucr-1, and 5 low-molecular weight protein subunits qcr6, qcr7, qcr8, qcr9 and probably NCU16844/qcr10. The complex exists as an obligatory dimer and forms supercomplexes (SCs) in the inner mitochondrial membrane with NADH-ubiquinone oxidoreductase (complex I, CI) and cytochrome c oxidase (complex IV, CIV), resulting in different assemblies (supercomplexes SCI(1)III(2), SCIII(2)IV(1) and SCIII(2)IV(2) as well as higher order I(x)III(y)IV(z) megacomplexes). It depends on [2Fe-2S] cluster as a cofactor. In terms of processing, processed by both the mitochondrial processing peptidase (MPP) and the mitochondrial intermediate protease (MIP). Initially, MPP removes 25 amino acids from the newly imported precursor in the mitochondrial matrix. This proteolytic processing is then followed by a second proteolytic cleavage by MIP, which removes an octapeptide to generate mature-sized Rieske protein.

Its subcellular location is the mitochondrion inner membrane. It carries out the reaction a quinol + 2 Fe(III)-[cytochrome c](out) = a quinone + 2 Fe(II)-[cytochrome c](out) + 2 H(+)(out). Its function is as follows. Component of the ubiquinol-cytochrome c oxidoreductase, a multisubunit transmembrane complex that is part of the mitochondrial electron transport chain which drives oxidative phosphorylation. The respiratory chain contains 3 multisubunit complexes succinate dehydrogenase (complex II, CII), ubiquinol-cytochrome c oxidoreductase (cytochrome b-c1 complex, complex III, CIII) and cytochrome c oxidase (complex IV, CIV), that cooperate to transfer electrons derived from NADH and succinate to molecular oxygen, creating an electrochemical gradient over the inner membrane that drives transmembrane transport and the ATP synthase. The cytochrome b-c1 complex catalyzes electron transfer from ubiquinol to cytochrome c, linking this redox reaction to translocation of protons across the mitochondrial inner membrane, with protons being carried across the membrane as hydrogens on the quinol. In the process called Q cycle, 2 protons are consumed from the matrix, 4 protons are released into the intermembrane space and 2 electrons are passed to cytochrome c. The Rieske protein is a catalytic core subunit containing a [2Fe-2S] iron-sulfur cluster. It cycles between 2 conformational states during catalysis to transfer electrons from the quinol bound in the Q(0) site in cytochrome b to cytochrome c1. The polypeptide is Cytochrome b-c1 complex subunit Rieske, mitochondrial (fes-1) (Neurospora crassa (strain ATCC 24698 / 74-OR23-1A / CBS 708.71 / DSM 1257 / FGSC 987)).